Reading from the N-terminus, the 464-residue chain is Argininosuccinate lyase (464 aa).

This sequence belongs to the lyase 1 family. Argininosuccinate lyase subfamily.

The protein resides in the cytoplasm. The enzyme catalyses 2-(N(omega)-L-arginino)succinate = fumarate + L-arginine. It participates in amino-acid biosynthesis; L-arginine biosynthesis; L-arginine from L-ornithine and carbamoyl phosphate: step 3/3. The sequence is that of Argininosuccinate lyase from Pseudomonas savastanoi pv. phaseolicola (strain 1448A / Race 6) (Pseudomonas syringae pv. phaseolicola (strain 1448A / Race 6)).